The chain runs to 464 residues: Galactose-proton symporter (464 aa).

At Met-1–Thr-15 the chain is on the cytoplasmic side. Residues Phe-16–Ile-36 form a helical membrane-spanning segment. The Periplasmic portion of the chain corresponds to Ala-37–Trp-56. Residues Val-57–Phe-77 traverse the membrane as a helical segment. Residues Lys-78 to Ser-84 lie on the Cytoplasmic side of the membrane. A helical transmembrane segment spans residues Leu-85–Val-105. Over Glu-106–Arg-112 the chain is Periplasmic. A helical transmembrane segment spans residues Val-113–Ile-133. Residues Ala-134–Arg-139 are Cytoplasmic-facing. A helical membrane pass occupies residues Gly-140 to Ser-160. Over Asp-161 to Arg-171 the chain is Periplasmic. A helical membrane pass occupies residues Trp-172–Pro-192. Residues Asp-193–Arg-250 are Cytoplasmic-facing. The chain crosses the membrane as a helical span at residues Ala-251–Met-271. Over Tyr-272–Met-290 the chain is Periplasmic. A helical transmembrane segment spans residues Trp-291–Val-311. Topologically, residues Asp-312–Thr-321 are cytoplasmic. A helical transmembrane segment spans residues Leu-322–Ile-342. Residues His-343–Ala-351 are Periplasmic-facing. The chain crosses the membrane as a helical span at residues Ile-352–Val-372. The Cytoplasmic segment spans residues Leu-373–Asn-394. Residues Trp-395–Ala-415 form a helical membrane-spanning segment. Residue Asn-416 is a topological domain, periplasmic. A helical transmembrane segment spans residues Thr-417–Pro-437. At Glu-438 to Asp-464 the chain is on the cytoplasmic side.

The protein belongs to the major facilitator superfamily. Sugar transporter (TC 2.A.1.1) family.

Its subcellular location is the cell inner membrane. Functionally, uptake of galactose across the boundary membrane with the concomitant transport of protons into the cell (symport system). The sequence is that of Galactose-proton symporter (galP) from Escherichia coli O6:H1 (strain CFT073 / ATCC 700928 / UPEC).